Consider the following 592-residue polypeptide: MASEIHMTGPMCLIENTNGRLMANPEALKILSAITQPMVVVAIVGLYRTGKSYLMNKLAGKKKGFSLGSTVQSHTKGIWMWCVPHPKKPGHILVLLDTEGLGDVEKGDNQNDSWIFALAVLLSSTFVYNSIGTINQQAMDQLYYVTELTHRIRSKSSPDENENEVEDSADFVSFFPDFVWTLRDFSLDLEADGQPLTPDEYLTYSLKLKKGTSQKDETFNLPRLCIRKFFPKKKCFVFDRPVHRRKLAQLEKLQDEELDPEFVQQVADFCSYIFSNSKTKTLSGGIQVNGPRLESLVLTYVNAISSGDLPCMENAVLALAQIENSAAVQKAIAHYEQQMGQKVQLPTETLQELLDLHRDSEREAIEVFIRSSFKDVDHLFQKELAAQLEKKRDDFCKQNQEASSDRCSALLQVIFSPLEEEVKAGIYSKPGGYRLFVQKLQDLKKKYYEEPRKGIQAEEILQTYLKSKESMTDAILQTDQTLTEKEKEIEVERVKAESAQASAKMLQEMQRKNEQMMEQKERSYQEHLKQLTEKMENDRVQLLKEQERTLALKLQEQEQLLKEGFQKESRIMKNEIQDLQTKMRRRKACTIS.

Positions 1-311 (MASEIHMTGP…NAISSGDLPC (311 aa)) are GTPase domain (Globular). The GB1/RHD3-type G domain occupies 35–278 (TQPMVVVAIV…FCSYIFSNSK (244 aa)). Residues 45 to 52 (GLYRTGKS), 67 to 69 (LGS), and 97 to 101 (DTEGL) contribute to the GTP site. A Phosphoserine; by PIM1 modification is found at serine 156. Residues lysine 207, lysine 209, lysine 210, lysine 382, lysine 562, lysine 567, lysine 573, and lysine 587 each participate in a (Microbial infection) Glycyl lysine isopeptide (Lys-Gly) (interchain with G-Cter in ubiquitin) cross-link. Cysteine 589 bears the Cysteine methyl ester mark. Cysteine 589 carries the S-farnesyl cysteine lipid modification. Threonine 590 is modified (phosphothreonine; by PIM1). The propeptide at 590–592 (TIS) is removed in mature form.

This sequence belongs to the TRAFAC class dynamin-like GTPase superfamily. GB1/RHD3 GTPase family. GB1 subfamily. In terms of assembly, homodimer; homodimerization occurs upon GTP-binding and is required for the second hydrolysis step from GDP to GMP. Undergoes conformational changes and oligomerization upon GTP-binding and hydrolysis. Heterodimer with other family members, including GBP2, GBP3, GBP4 and GBP5. Dimerization regulates subcellular location to membranous structures. Interacts with SQSTM1. Interacts (when phosphorylated) with 14-3-3 protein sigma (SFN); leading to GBP1 retention in the cytosol and inactivation. Isoprenylation is required for proper subcellular location. Post-translationally, phosphorylated at Ser-156 by PIM1 in absence of infection, inhibits GBP1: phosphorylation promotes interaction with 14-3-3 protein sigma (SFN), leading to GBP1 retention in the cytosol. Dephosphorylated in response to infection, liberating GBP1. In terms of processing, (Microbial infection) Ubiquitinated by S.flexneri IpaH9.8, leading to its degradation by the proteasome, thereby preventing its ability to promote host defense against bacterial infection.

Its subcellular location is the cytoplasmic vesicle membrane. The protein resides in the golgi apparatus membrane. It is found in the cell membrane. The protein localises to the cytoplasm. It localises to the cytosol. Its subcellular location is the secreted. The enzyme catalyses GTP + H2O = GDP + phosphate + H(+). It carries out the reaction GDP + H2O = GMP + phosphate + H(+). Functionally, interferon (IFN)-inducible GTPase that plays important roles in innate immunity against a diverse range of bacterial, viral and protozoan pathogens. Hydrolyzes GTP to GMP in two consecutive cleavage reactions: GTP is first hydrolyzed to GDP and then to GMP in a processive manner. Following infection, recruited to the pathogen-containing vacuoles or vacuole-escaped bacteria and promotes both inflammasome assembly and autophagy. Acts as a positive regulator of inflammasome assembly by facilitating the detection of inflammasome ligands from pathogens. Involved in the lysis of pathogen-containing vacuoles, releasing pathogens into the cytosol. Following pathogen release in the cytosol, forms a protein coat in a GTPase-dependent manner that encapsulates pathogens and promotes the detection of ligands by pattern recognition receptors. Plays a key role in inflammasome assembly in response to infection by Gram-negative bacteria: following pathogen release in the cytosol, forms a protein coat that encapsulates Gram-negative bacteria and directly binds to lipopolysaccharide (LPS), disrupting the O-antigen barrier and unmasking lipid A that is that detected by the non-canonical inflammasome effector CASP4/CASP11. Also promotes recruitment of proteins that mediate bacterial cytolysis, leading to release double-stranded DNA (dsDNA) that activates the AIM2 inflammasome. Involved in autophagy by regulating bacteriolytic peptide generation via its interaction with ubiquitin-binding protein SQSTM1, which delivers monoubiquitinated proteins to autolysosomes for the generation of bacteriolytic peptides. Confers protection to several pathogens, including the bacterial pathogens L.monocytogenes and M.bovis BCG as well as the protozoan pathogen T.gondii. Exhibits antiviral activity against influenza virus. This chain is Guanylate-binding protein 1, found in Homo sapiens (Human).